The chain runs to 84 residues: Exodeoxyribonuclease 7 small subunit (84 aa).

This sequence belongs to the XseB family. Heterooligomer composed of large and small subunits.

The protein localises to the cytoplasm. The catalysed reaction is Exonucleolytic cleavage in either 5'- to 3'- or 3'- to 5'-direction to yield nucleoside 5'-phosphates.. In terms of biological role, bidirectionally degrades single-stranded DNA into large acid-insoluble oligonucleotides, which are then degraded further into small acid-soluble oligonucleotides. This Caulobacter vibrioides (strain ATCC 19089 / CIP 103742 / CB 15) (Caulobacter crescentus) protein is Exodeoxyribonuclease 7 small subunit.